The primary structure comprises 247 residues: Agamous-like MADS-box protein FUL-L (247 aa).

The 61-residue stretch at 1–61 (MGRGRVQLKR…GKLFEYSSDS (61 aa)) folds into the MADS-box domain. In terms of domain architecture, K-box spans 88 to 178 (QGNWSMDYPK…AKKVKEKEKV (91 aa)). A disordered region spans residues 224–247 (EDGAEARPSPNTLMPPWMLRHVNE).

As to expression, expressed in tendrils and flowers.

Its subcellular location is the nucleus. In terms of biological role, probable transcription factor involved in flower development. The protein is Agamous-like MADS-box protein FUL-L of Vitis vinifera (Grape).